The primary structure comprises 525 residues: Ribosomal protein S6 kinase beta-1 (525 aa).

The short motif at 28–32 (FDIDL) is the TOS motif element. Residues 32–46 (LDQPEDAGSEDELEE) show a composition bias toward acidic residues. Residues 32 to 54 (LDQPEDAGSEDELEEGGQLNESM) are disordered. The Protein kinase domain maps to 91-352 (FELLRVLGKG…AGEVQAHPFF (262 aa)). ATP is bound by residues 97–105 (LGKGGYGKV) and Lys123. The Proton acceptor role is filled by Asp218. Thr252 carries the phosphothreonine; by PDPK1 modification. The 71-residue stretch at 353–423 (RHINWEELLA…VAPSVLESVK (71 aa)) folds into the AGC-kinase C-terminal domain. Positions 380–399 (SQFDSKFTRQTPVDSPDDST) are disordered. A compositionally biased stretch (polar residues) spans 381-399 (QFDSKFTRQTPVDSPDDST). Position 394 is a phosphoserine (Ser394). Thr412 bears the Phosphothreonine; by MTOR, NEK6 and NEK7 mark. The segment at 424 to 525 (EKFSFEPKIR…KRPEHLRMNL (102 aa)) is autoinhibitory domain. Ser434 and Ser441 each carry phosphoserine. The residue at position 444 (Thr444) is a Phosphothreonine. Phosphoserine is present on residues Ser447 and Ser452. Lys516 is modified (N6-acetyllysine).

It belongs to the protein kinase superfamily. AGC Ser/Thr protein kinase family. S6 kinase subfamily. Interacts with PPP1R9A/neurabin-1. Interacts with RPTOR. Interacts with IRS1. Interacts with EIF3B and EIF3C. Interacts with TRAF4. Interacts with POLDIP3. Interacts (via N-terminus) with IER5. Post-translationally, phosphorylation at Thr-412 is regulated by mTORC1. The phosphorylation at this site is maintained by an agonist-dependent autophosphorylation mechanism. Activated by phosphorylation at Thr-252 by PDPK1. Dephosphorylation by PPP1CC at Thr-412 in mitochondrion.

Its subcellular location is the cytoplasm. The protein resides in the synapse. It is found in the synaptosome. The protein localises to the mitochondrion outer membrane. It localises to the mitochondrion. It catalyses the reaction L-seryl-[protein] + ATP = O-phospho-L-seryl-[protein] + ADP + H(+). It carries out the reaction L-threonyl-[protein] + ATP = O-phospho-L-threonyl-[protein] + ADP + H(+). Activation requires multiple phosphorylation events on serine/threonine residues. Activation appears to be first mediated by phosphorylation of multiple sites in the autoinhibitory domain, which facilitates phosphorylation at Thr-412, disrupting the autoinhibitory mechanism and allowing phosphorylation of Thr-252 by PDPK1. The active conformation of the kinase is believed to be stabilized by a mechanism involving three conserved phosphorylation sites located in the kinase domain activation loop (Thr-252) and in the AGC-kinase C-terminal domain (Ser-394 in the middle of the tail/linker region and Thr-412 within a hydrophobic motif at its end). Activated by mTORC1; isoform Alpha I and isoform Alpha II are sensitive to rapamycin, which inhibits activating phosphorylation at Thr-412. Activated by PDPK1. Its function is as follows. Serine/threonine-protein kinase that acts downstream of mTOR signaling in response to growth factors and nutrients to promote cell proliferation, cell growth and cell cycle progression. Regulates protein synthesis through phosphorylation of EIF4B, RPS6 and EEF2K, and contributes to cell survival by repressing the pro-apoptotic function of BAD. Under conditions of nutrient depletion, the inactive form associates with the EIF3 translation initiation complex. Upon mitogenic stimulation, phosphorylation by the mechanistic target of rapamycin complex 1 (mTORC1) leads to dissociation from the EIF3 complex and activation. The active form then phosphorylates and activates several substrates in the pre-initiation complex, including the EIF2B complex and the cap-binding complex component EIF4B. Also controls translation initiation by phosphorylating a negative regulator of EIF4A, PDCD4, targeting it for ubiquitination and subsequent proteolysis. Promotes initiation of the pioneer round of protein synthesis by phosphorylating POLDIP3/SKAR. In response to IGF1, activates translation elongation by phosphorylating EEF2 kinase (EEF2K), which leads to its inhibition and thus activation of EEF2. Also plays a role in feedback regulation of mTORC2 by mTORC1 by phosphorylating MAPKAP1/SIN1, MTOR and RICTOR, resulting in the inhibition of mTORC2 and AKT1 signaling. Also involved in feedback regulation of mTORC1 and mTORC2 by phosphorylating DEPTOR. Mediates cell survival by phosphorylating the pro-apoptotic protein BAD and suppressing its pro-apoptotic function. Phosphorylates mitochondrial URI1 leading to dissociation of a URI1-PPP1CC complex. The free mitochondrial PPP1CC can then dephosphorylate RPS6KB1 at Thr-412, which is proposed to be a negative feedback mechanism for the RPS6KB1 anti-apoptotic function. Mediates TNF-alpha-induced insulin resistance by phosphorylating IRS1 at multiple serine residues, resulting in accelerated degradation of IRS1. In cells lacking functional TSC1-2 complex, constitutively phosphorylates and inhibits GSK3B. May be involved in cytoskeletal rearrangement through binding to neurabin. Phosphorylates and activates the pyrimidine biosynthesis enzyme CAD, downstream of MTOR. Following activation by mTORC1, phosphorylates EPRS and thereby plays a key role in fatty acid uptake by adipocytes and also most probably in interferon-gamma-induced translation inhibition. This is Ribosomal protein S6 kinase beta-1 (Rps6kb1) from Mus musculus (Mouse).